The sequence spans 1863 residues: Breast cancer type 1 susceptibility protein (1863 aa).

Methionine 1 carries the post-translational modification N-acetylmethionine. An RING-type zinc finger spans residues 24-65 (CPICLELIKEPVSTKCDHIFCKFCMLKLLNQKKGPSQCPLCK). A Glycyl lysine isopeptide (Lys-Gly) (interchain with G-Cter in SUMO2) cross-link involves residue lysine 109. The residue at position 114 (serine 114) is a Phosphoserine. Residues 230–270 (ETDVTNTEHHQPSNNDLNTTEKRAAERHPEKYQGSSVSNLH) are disordered. Basic and acidic residues predominate over residues 248–260 (TTEKRAAERHPEK). Lysine 301 is covalently cross-linked (Glycyl lysine isopeptide (Lys-Gly) (interchain with G-Cter in SUMO2)). Residues 306 to 338 (NKSKQPGLARSQHNRWAGSKETCNDRRTPSTEK) form a disordered region. Residues 327-338 (TCNDRRTPSTEK) are compositionally biased toward basic and acidic residues. Lysine 339 participates in a covalent cross-link: Glycyl lysine isopeptide (Lys-Gly) (interchain with G-Cter in SUMO2). Phosphoserine occurs at positions 395, 398, 423, and 434. Residues lysine 443, lysine 459, and lysine 519 each participate in a glycyl lysine isopeptide (Lys-Gly) (interchain with G-Cter in SUMO2) cross-link. Low complexity predominate over residues 534-544 (QGTNQTEQNGQ). The interval 534–570 (QGTNQTEQNGQVMNITNSGHENKTKGDSIQNEKNPNP) is disordered. Position 551 is a phosphoserine (serine 551). Glycyl lysine isopeptide (Lys-Gly) (interchain with G-Cter in SUMO2) cross-links involve residues lysine 583 and lysine 654. The tract at residues 654–709 (KYNQMPVRHSRNLQLMEGKEPATGAKKSNKPNEQTSKRHDSDTFPELKLTNAPGSF) is disordered. Phosphoserine occurs at positions 694, 708, and 725. Glycyl lysine isopeptide (Lys-Gly) (interchain with G-Cter in SUMO2) cross-links involve residues lysine 734 and lysine 739. A phosphoserine mark is found at serine 753 and serine 840. Residues lysine 918 and lysine 987 each participate in a glycyl lysine isopeptide (Lys-Gly) (interchain with G-Cter in SUMO2) cross-link. Position 988 is a phosphoserine; by CHEK2 (serine 988). Serine 1009 is subject to Phosphoserine. Residue lysine 1079 forms a Glycyl lysine isopeptide (Lys-Gly) (interchain with G-Cter in SUMO2) linkage. At serine 1143 the chain carries Phosphoserine; by ATR; in vitro. The segment at 1181 to 1216 (VQKGELSRSPSPFTHTHLAQGYRRGAKKLESSEENL) is disordered. A phosphoserine mark is found at serine 1189, serine 1191, serine 1211, serine 1217, and serine 1218. Serine 1280 is modified (phosphoserine; by ATR; in vitro). The tract at residues 1322-1387 (KQMRHQSESQ…VSEDCSGLSS (66 aa)) is disordered. Residues serine 1328, serine 1336, and serine 1342 each carry the phosphoserine modification. The span at 1373 to 1387 (ESETSVSEDCSGLSS) shows a compositional bias: polar residues. Residue serine 1387 is modified to Phosphoserine; by ATM and ATR. Threonine 1394 is subject to Phosphothreonine; by ATR; in vitro. The interaction with PALB2 stretch occupies residues 1397–1424 (RDTMQHNLIKLQQEMAELEAVLEQHGSQ). Serine 1423 bears the Phosphoserine; by ATM and ATR mark. The interval 1440 to 1505 (EDLRNPEQST…SSPSKCPSLD (66 aa)) is disordered. Polar residues predominate over residues 1445–1470 (PEQSTSEKAVLTSQKSSEYPISQNPE). At serine 1457 the chain carries Phosphoserine; by ATR; in vitro. Serine 1524 is subject to Phosphoserine; by ATM. Phosphoserine is present on serine 1542. Residues 1565–1596 (ESGISLFSDDPESDPSEDRAPESARVGNIPSS) are disordered. BRCT domains are found at residues 1642–1736 (STER…DFEV) and 1756–1855 (QDRK…TYLI).

In terms of assembly, heterodimer with BARD1. Part of the BRCA1-associated genome surveillance complex (BASC), which contains BRCA1, MSH2, MSH6, MLH1, ATM, BLM, PMS2 and the MRE11-RAD50-NBN protein (MRN) complex. This association could be a dynamic process changing throughout the cell cycle and within subnuclear domains. Component of the BRCA1-A complex, at least composed of BRCA1, BARD1, UIMC1/RAP80, ABRAXAS1, BRCC3/BRCC36, BABAM2 and BABAM1/NBA1. Interacts (via the BRCT domains) with ABRAXAS1 (phosphorylated form); this is important for recruitment to sites of DNA damage. Can form a heterotetramer with two molecules of ABRAXAS1 (phosphorylated form). Component of the BRCA1-RBBP8 complex. Interacts (via the BRCT domains) with RBBP8 ('Ser-327' phosphorylated form); the interaction ubiquitinates RBBP8, regulates CHEK1 activation, and involves RBBP8 in BRCA1-dependent G2/M checkpoint control on DNA damage. Associates with RNA polymerase II holoenzyme. Interacts with SMC1A, NELFB, DCLRE1C, CLSPN. Interacts with CHEK1, CHEK2, BAP1, BRCC3, UBXN1 and PCLAF. Interacts (via BRCT domains) with BRIP1 (phosphorylated form). Interacts with FANCD2 (ubiquitinated form). Interacts with H2AX (phosphorylated on 'Ser-140'). Interacts (via the BRCT domains) with ACACA (phosphorylated form); the interaction prevents dephosphorylation of ACACA. Part of a BRCA complex containing BRCA1, BRCA2 and PALB2. Interacts directly with PALB2; the interaction is essential for its function in HRR. Interacts directly with BRCA2; the interaction occurs only in the presence of PALB2 which serves as the bridging protein. Interacts (via the BRCT domains) with LMO4; the interaction represses the transcriptional activity of BRCA1. Interacts (via the BRCT domains) with CCAR2 (via N-terminus); the interaction represses the transcriptional activator activity of BRCA1. Interacts with EXD2. Interacts (via C-terminus) with DHX9; this interaction is direct and links BRCA1 to the RNA polymerase II holoenzyme. Interacts with DNA helicase ZGRF1; the interaction is increased following DNA damage induction. In terms of processing, phosphorylated in response to IR, UV, and various stimuli that cause checkpoint activation, probably by ATM or ATR. Phosphorylation at Ser-988 by CHEK2 regulates mitotic spindle assembly. Phosphorylation by AURKA regulates centrosomal microtubule nucleation. Post-translationally, autoubiquitinated, undergoes 'Lys-6'-linked polyubiquitination. 'Lys-6'-linked polyubiquitination does not promote degradation. In terms of tissue distribution, isoform 1 and isoform 3 are widely expressed. Isoform 3 is reduced or absent in several breast and ovarian cancer cell lines.

The protein resides in the nucleus. Its subcellular location is the chromosome. It is found in the cytoplasm. The enzyme catalyses S-ubiquitinyl-[E2 ubiquitin-conjugating enzyme]-L-cysteine + [acceptor protein]-L-lysine = [E2 ubiquitin-conjugating enzyme]-L-cysteine + N(6)-ubiquitinyl-[acceptor protein]-L-lysine.. The protein operates within protein modification; protein ubiquitination. With respect to regulation, the E3 ubiquitin-protein ligase activity is inhibited by phosphorylation by AURKA. Activity is increased by phosphatase treatment. Functionally, E3 ubiquitin-protein ligase that specifically mediates the formation of 'Lys-6'-linked polyubiquitin chains and plays a central role in DNA repair by facilitating cellular responses to DNA damage. It is unclear whether it also mediates the formation of other types of polyubiquitin chains. The BRCA1-BARD1 heterodimer coordinates a diverse range of cellular pathways such as DNA damage repair, ubiquitination and transcriptional regulation to maintain genomic stability. Regulates centrosomal microtubule nucleation. Required for appropriate cell cycle arrests after ionizing irradiation in both the S-phase and the G2 phase of the cell cycle. Required for FANCD2 targeting to sites of DNA damage. Inhibits lipid synthesis by binding to inactive phosphorylated ACACA and preventing its dephosphorylation. Contributes to homologous recombination repair (HRR) via its direct interaction with PALB2, fine-tunes recombinational repair partly through its modulatory role in the PALB2-dependent loading of BRCA2-RAD51 repair machinery at DNA breaks. Component of the BRCA1-RBBP8 complex which regulates CHEK1 activation and controls cell cycle G2/M checkpoints on DNA damage via BRCA1-mediated ubiquitination of RBBP8. Acts as a transcriptional activator. In Homo sapiens (Human), this protein is Breast cancer type 1 susceptibility protein (BRCA1).